The chain runs to 1257 residues: RAF-like serine/threonine-protein kinase 24 (1257 aa).

Residues 1–21 (MDQAKGYEHVRYTAPDPRDEG) are disordered. The PB1 domain maps to 191–277 (PRDQKLRYVG…EKPRMFLFSS (87 aa)). Composition is skewed to basic and acidic residues over residues 457 to 480 (VQDP…KVND) and 493 to 502 (KEPKMRRESS). Disordered stretches follow at residues 457-629 (VQDP…RTSQ) and 761-789 (SQSE…VPQG). Ser-474 is subject to Phosphoserine. Positions 533-548 (TQTSSSTPDPSSSTLS) are enriched in low complexity. Over residues 550–576 (KSLRKSEDHVENNLSAKEPKMRKEHST) the composition is skewed to basic and acidic residues. The residue at position 555 (Ser-555) is a Phosphoserine. Over residues 583–593 (SVSSVSSDSMV) the composition is skewed to low complexity. Residues 769-782 (ETNTPEHVSQTETS) show a composition bias toward polar residues. Ser-777 carries the post-translational modification Phosphoserine. The 266-residue stretch at 974-1239 (LEELKELGSG…PEIARRLRTM (266 aa)) folds into the Protein kinase domain. ATP is bound by residues 980-988 (LGSGTFGTV) and Lys-1001. Ser-1013 carries the post-translational modification Phosphoserine. The active-site Proton acceptor is the Asp-1102.

Belongs to the protein kinase superfamily. Ser/Thr protein kinase family. Hyperphosphorylated in response to auxin in an ABP1- and TMK1-dependent manner.

It is found in the cytoplasm. It catalyses the reaction L-seryl-[protein] + ATP = O-phospho-L-seryl-[protein] + ADP + H(+). The enzyme catalyses L-threonyl-[protein] + ATP = O-phospho-L-threonyl-[protein] + ADP + H(+). With respect to regulation, activated by auxin via rapid phosphorylation downstream of ABP1 and TMK1 signaling. RAF-like protein kinase acting, together with RAF20, as a central mediator of a fast response pathway to auxin involving proteins phosphorylation, and leading to rapid cellular responses including membrane depolarization and cytoplasmic streaming. Required for general growth and developmental process. The sequence is that of RAF-like serine/threonine-protein kinase 24 from Arabidopsis thaliana (Mouse-ear cress).